The following is an 81-amino-acid chain: Small ribosomal subunit protein bS16 (81 aa).

Belongs to the bacterial ribosomal protein bS16 family.

The polypeptide is Small ribosomal subunit protein bS16 (Colwellia psychrerythraea (strain 34H / ATCC BAA-681) (Vibrio psychroerythus)).